The following is a 38-amino-acid chain: Photosystem II reaction center protein L (38 aa).

A helical membrane pass occupies residues 17–37 (SLYWGLLLIFVLAVLFSNYFF).

The protein belongs to the PsbL family. PSII is composed of 1 copy each of membrane proteins PsbA, PsbB, PsbC, PsbD, PsbE, PsbF, PsbH, PsbI, PsbJ, PsbK, PsbL, PsbM, PsbT, PsbX, PsbY, PsbZ, Psb30/Ycf12, at least 3 peripheral proteins of the oxygen-evolving complex and a large number of cofactors. It forms dimeric complexes.

Its subcellular location is the plastid. The protein resides in the chloroplast thylakoid membrane. Its function is as follows. One of the components of the core complex of photosystem II (PSII). PSII is a light-driven water:plastoquinone oxidoreductase that uses light energy to abstract electrons from H(2)O, generating O(2) and a proton gradient subsequently used for ATP formation. It consists of a core antenna complex that captures photons, and an electron transfer chain that converts photonic excitation into a charge separation. This subunit is found at the monomer-monomer interface and is required for correct PSII assembly and/or dimerization. The sequence is that of Photosystem II reaction center protein L from Psilotum nudum (Whisk fern).